We begin with the raw amino-acid sequence, 158 residues long: NAD(P)H-quinone oxidoreductase subunit N, organellar chromatophore (158 aa).

It belongs to the complex I NdhN subunit family. NDH-1 can be composed of about 15 different subunits; different subcomplexes with different compositions have been identified which probably have different functions.

The protein resides in the plastid. It localises to the organellar chromatophore thylakoid membrane. The enzyme catalyses a plastoquinone + NADH + (n+1) H(+)(in) = a plastoquinol + NAD(+) + n H(+)(out). It catalyses the reaction a plastoquinone + NADPH + (n+1) H(+)(in) = a plastoquinol + NADP(+) + n H(+)(out). NDH-1 shuttles electrons from an unknown electron donor, via FMN and iron-sulfur (Fe-S) centers, to quinones in the respiratory and/or the photosynthetic chain. The immediate electron acceptor for the enzyme in this species is believed to be plastoquinone. Couples the redox reaction to proton translocation, and thus conserves the redox energy in a proton gradient. This Paulinella chromatophora protein is NAD(P)H-quinone oxidoreductase subunit N, organellar chromatophore.